The primary structure comprises 411 residues: Lissencephaly-1 homolog (411 aa).

The region spanning 9–41 is the LisH domain; sequence QREELNQAIADYLGSNGYSSALEAFRKEADISG. Positions 56–83 form a coiled coil; sequence TSVIRLQKKVMELEAKLSEAEKEVIEGA. WD repeat units lie at residues 106–147, 149–187, 191–230, 233–272, 275–334, 337–376, and 379–411; these read GHRA…RSLK, HTSS…DCVK, GHDH…CVKT, GHRE…CKAE, AHDH…CLFV, GHDN…FMKT, and AHQH…WECR.

This sequence belongs to the WD repeat LIS1/nudF family.

It localises to the cytoplasm. The protein localises to the cytoskeleton. It is found in the microtubule organizing center. Its subcellular location is the centrosome. Positively regulates the activity of the minus-end directed microtubule motor protein dynein. May enhance dynein-mediated microtubule sliding by targeting dynein to the microtubule plus end. Required for several dynein- and microtubule-dependent processes. This chain is Lissencephaly-1 homolog, found in Glossina morsitans morsitans (Savannah tsetse fly).